The chain runs to 367 residues: HTH-type transcriptional regulator GbdR (367 aa).

One can recognise an HTH araC/xylS-type domain in the interval 227-325 (QEIVALMEAN…GIPPRDERQG (99 aa)). DNA-binding regions (H-T-H motif) lie at residues 244 to 265 (DELA…QKYL) and 292 to 315 (IIEV…REYF).

Functionally, specific regulator of choline metabolism, which activates transcription of at least 25 genes from 11 promoters in response to choline metabolites. Required for the induction of plcH, encoding the phospholipase C, and pchP, encoding the phosphorylcholine phosphatase, in response to glycine betaine (GB) and dimethylglycine (DMG). Also controls the expression of gbcAB and dgcAB, which are required for GB and DMG degradation, respectively, in response to both GB and DMG. The GbdR regulon also includes genes encoding sarcosine, glycine and serine catabolic enzymes, the BetX and CbcXWV quaternary amine transport proteins and the acetylcholine esterase gene, choE. Acts by binding directly to the promoter region of the genes. May play an important role during P.aeruginosa interactions with eukaryotes. The sequence is that of HTH-type transcriptional regulator GbdR from Pseudomonas aeruginosa (strain UCBPP-PA14).